The chain runs to 619 residues: MRGTRKYQHVIETPDPGKWELAGYEESLPISEKSNPMTRELDKADPSQLVQLLRDCDAEIFQEEDENLIHYHRLYSESVLKTMGDVAKRVQEVLKNPDDSLVVLSGCGTSGRLALLLANSFNGLLKGLHKTPCYCYIMSGGDRSIVTSQESSEDNPQLGAQELEKVCEGKKNVLFIGISCGLSAPFIAGQLDFCMRHLDVYLPVLVGFNPVSMARNERIEGWHSSFRQVAERLQTLHDSQKGFILNPAVGPEGVSGSSRMKGGSATKILLETLLLVAHKAESNVPVTEKCLLEILRTYERAHKVTYSQSKKIAALMKQTATSLQKKGHLYILGWGTLGLVGIMDAVECVPTYQADWRDVRGFITGGYHSIENKEGDLSSLGPQFSISHEDFVKNVLPSVSETDTVLLIFTLDDDLNQIEKLVALVKEKTSNIQVICHATAGQYLPNSLKKTIPSIIGLTWPILFLEYEGAFIQKFQRELSTKWILDTVTSGAYTLRGKIFRNFMVDFKINNSKLFHRATSVLQRLTGQSHQRCTEVLLQSIYGEQTLSEQIRNTTIAGHVEAAASQDKVLPVAIVSLLRSCTIQDSRSRINSSLSIRSAIESSMNVPGRKRGAEDSESR.

2 SIS domains span residues 90 to 283 (VQEV…AESN) and 319 to 498 (TATS…LRGK). Position 107 to 109 (107 to 109 (CGT)) interacts with keto-D-fructose 6-phosphate. Beta-D-fructose 1-phosphate is bound by residues 109–110 (TS), E153, 179–181 (SCG), and E347. Keto-D-fructose 6-phosphate contacts are provided by residues 179 to 183 (SCGLS) and E347. Residues 462–464 (ILF) are essential for interaction with GCK. K513 contacts keto-D-fructose 6-phosphate. Beta-D-fructose 1-phosphate is bound at residue K513.

This sequence belongs to the GCKR family. In terms of assembly, interacts (fructose 6-phosphate bound form) with gck.

It is found in the nucleus. The protein resides in the cytoplasm. The protein localises to the mitochondrion. Its function is as follows. Regulates glucokinase (gck) by forming an inactive complex with this enzyme. The affinity of gckr for gck is modulated by fructose metabolites: gckr with bound fructose 6-phosphate has increased affinity for gck, while gckr with bound fructose 1-phosphate has strongly decreased affinity for gck and does not inhibit gck activity. This is Glucokinase regulatory protein from Xenopus laevis (African clawed frog).